A 241-amino-acid chain; its full sequence is Thyroid transcription factor 1-associated protein 26 (241 aa).

2 disordered regions span residues 1 to 22 (MAPVRRSAKWRPGGIEARGEGV) and 182 to 205 (KRAAKKQEFERRKQEREEAQRQYK). Over residues 186–202 (KKQEFERRKQEREEAQR) the composition is skewed to basic and acidic residues.

This sequence belongs to the TAP26 family. In terms of assembly, interacts with NKX2-1. As to expression, ubiquitously expressed. In lung, expression is restricted to the alveolar epithelial cells.

Its subcellular location is the nucleus. In terms of biological role, component of the transcription complexes of the pulmonary surfactant-associated protein-B (SFTPB) and -C (SFTPC). Enhances homeobox protein Nkx-2.1-activated SFTPB and SFTPC promoter activities. This chain is Thyroid transcription factor 1-associated protein 26 (CCDC59), found in Homo sapiens (Human).